The sequence spans 103 residues: UPF0145 protein PERMA_0324 (103 aa).

Belongs to the UPF0145 family.

The polypeptide is UPF0145 protein PERMA_0324 (Persephonella marina (strain DSM 14350 / EX-H1)).